A 341-amino-acid polypeptide reads, in one-letter code: Phosphate acyltransferase (341 aa).

The protein belongs to the PlsX family. In terms of assembly, homodimer. Probably interacts with PlsY.

The protein resides in the cytoplasm. The catalysed reaction is a fatty acyl-[ACP] + phosphate = an acyl phosphate + holo-[ACP]. It functions in the pathway lipid metabolism; phospholipid metabolism. Its function is as follows. Catalyzes the reversible formation of acyl-phosphate (acyl-PO(4)) from acyl-[acyl-carrier-protein] (acyl-ACP). This enzyme utilizes acyl-ACP as fatty acyl donor, but not acyl-CoA. This Aliivibrio fischeri (strain ATCC 700601 / ES114) (Vibrio fischeri) protein is Phosphate acyltransferase.